A 360-amino-acid chain; its full sequence is Photosystem II protein D1 (360 aa).

The next 3 helical transmembrane spans lie at 29-46 (YIGW…TATS), 118-133 (HFFI…EWEL), and 142-156 (WIAV…AATA). Residue His118 coordinates chlorophyll a. Tyr126 contributes to the pheophytin a binding site. Residues Asp170 and Glu189 each coordinate [CaMn4O5] cluster. A helical transmembrane segment spans residues 197 to 218 (FHMMGVAGVFGGSLFSAMHGSL). His198 is a binding site for chlorophyll a. Residues His215 and 264 to 265 (SF) contribute to the a quinone site. Position 215 (His215) interacts with Fe cation. His272 is a Fe cation binding site. A helical transmembrane segment spans residues 274–288 (FLALWPVVCICVTAL). Residues His332, Glu333, Asp342, and Ala344 each coordinate [CaMn4O5] cluster. Positions 345-360 (SEVSLPVALNKVEING) are excised as a propeptide.

Belongs to the reaction center PufL/M/PsbA/D family. As to quaternary structure, PSII is composed of 1 copy each of membrane proteins PsbA, PsbB, PsbC, PsbD, PsbE, PsbF, PsbH, PsbI, PsbJ, PsbK, PsbL, PsbM, PsbT, PsbY, PsbZ, Psb30/Ycf12, at least 3 peripheral proteins of the oxygen-evolving complex and a large number of cofactors. It forms dimeric complexes. It depends on The D1/D2 heterodimer binds P680, chlorophylls that are the primary electron donor of PSII, and subsequent electron acceptors. It shares a non-heme iron and each subunit binds pheophytin, quinone, additional chlorophylls, carotenoids and lipids. D1 provides most of the ligands for the Mn4-Ca-O5 cluster of the oxygen-evolving complex (OEC). There is also a Cl(-1) ion associated with D1 and D2, which is required for oxygen evolution. The PSII complex binds additional chlorophylls, carotenoids and specific lipids. as a cofactor. Tyr-161 forms a radical intermediate that is referred to as redox-active TyrZ, YZ or Y-Z. In terms of processing, C-terminally processed by CTPA; processing is essential to allow assembly of the oxygen-evolving complex and thus photosynthetic growth.

It localises to the plastid. The protein resides in the chloroplast thylakoid membrane. The catalysed reaction is 2 a plastoquinone + 4 hnu + 2 H2O = 2 a plastoquinol + O2. Photosystem II (PSII) is a light-driven water:plastoquinone oxidoreductase that uses light energy to abstract electrons from H(2)O, generating O(2) and a proton gradient subsequently used for ATP formation. It consists of a core antenna complex that captures photons, and an electron transfer chain that converts photonic excitation into a charge separation. The D1/D2 (PsbA/PsbD) reaction center heterodimer binds P680, the primary electron donor of PSII as well as several subsequent electron acceptors. This Galdieria sulphuraria (Red alga) protein is Photosystem II protein D1.